A 172-amino-acid chain; its full sequence is Shikimate kinase (172 aa).

Residue 14 to 19 participates in ATP binding; it reads GAGKST. S18 contacts Mg(2+). The substrate site is built by D36, R60, and G82. Residue R120 coordinates ATP. R140 provides a ligand contact to substrate. Residue Q157 participates in ATP binding.

Belongs to the shikimate kinase family. Monomer. The cofactor is Mg(2+).

It is found in the cytoplasm. It carries out the reaction shikimate + ATP = 3-phosphoshikimate + ADP + H(+). It participates in metabolic intermediate biosynthesis; chorismate biosynthesis; chorismate from D-erythrose 4-phosphate and phosphoenolpyruvate: step 5/7. In terms of biological role, catalyzes the specific phosphorylation of the 3-hydroxyl group of shikimic acid using ATP as a cosubstrate. The sequence is that of Shikimate kinase from Colwellia psychrerythraea (strain 34H / ATCC BAA-681) (Vibrio psychroerythus).